The primary structure comprises 152 residues: Biotin carboxyl carrier protein of acetyl-CoA carboxylase (152 aa).

The 77-residue stretch at 72–148 (IIDILSPISG…TKNQVLMKII (77 aa)) folds into the Biotinyl-binding domain. Lys-114 carries the N6-biotinyllysine modification.

It localises to the plastid. Its subcellular location is the chloroplast. The protein operates within lipid metabolism; fatty acid biosynthesis. In terms of biological role, this protein is a component of the acetyl coenzyme A carboxylase complex; first, biotin carboxylase catalyzes the carboxylation of the carrier protein and then the transcarboxylase transfers the carboxyl group to form malonyl-CoA. This is Biotin carboxyl carrier protein of acetyl-CoA carboxylase (accB) from Cyanidium caldarium (Red alga).